Here is a 218-residue protein sequence, read N- to C-terminus: Small ribosomal subunit protein uS3c (218 aa).

One can recognise a KH type-2 domain in the interval 47 to 118 (VQNNIRISSG…KLNIAITRIS (72 aa)).

Belongs to the universal ribosomal protein uS3 family. Part of the 30S ribosomal subunit.

It is found in the plastid. Its subcellular location is the chloroplast. The polypeptide is Small ribosomal subunit protein uS3c (rps3) (Draba nemorosa (Woodland whitlowgrass)).